The sequence spans 184 residues: MKNITDSFVSLGHWPFAGSFGFNTDILATNLINLSVVLGVLIFFGKGVLSDLLDNRRQRILSTIRNSEELRRGALEQLEKARARLRKVEMEADEYRVNGYSEIEREKMNLINATYENLERLENYKNETLHFEQQRAINQVRQRVFQQALQGALGTLNNCLNSELHFRTISANIGMLGAMKEITD.

Residues 26–48 traverse the membrane as a helical segment; it reads ILATNLINLSVVLGVLIFFGKGV.

It belongs to the ATPase B chain family. As to quaternary structure, F-type ATPases have 2 components, F(1) - the catalytic core - and F(0) - the membrane proton channel. F(1) has five subunits: alpha(3), beta(3), gamma(1), delta(1), epsilon(1). F(0) has four main subunits: a(1), b(1), b'(1) and c(10-14). The alpha and beta chains form an alternating ring which encloses part of the gamma chain. F(1) is attached to F(0) by a central stalk formed by the gamma and epsilon chains, while a peripheral stalk is formed by the delta, b and b' chains.

The protein localises to the plastid. Its subcellular location is the chloroplast thylakoid membrane. F(1)F(0) ATP synthase produces ATP from ADP in the presence of a proton or sodium gradient. F-type ATPases consist of two structural domains, F(1) containing the extramembraneous catalytic core and F(0) containing the membrane proton channel, linked together by a central stalk and a peripheral stalk. During catalysis, ATP synthesis in the catalytic domain of F(1) is coupled via a rotary mechanism of the central stalk subunits to proton translocation. Its function is as follows. Component of the F(0) channel, it forms part of the peripheral stalk, linking F(1) to F(0). The protein is ATP synthase subunit b, chloroplastic of Acorus calamus (Sweet flag).